Reading from the N-terminus, the 252-residue chain is Triosephosphate isomerase (252 aa).

Residue 10–12 (NWK) coordinates substrate. Residue H96 is the Electrophile of the active site. The active-site Proton acceptor is the E168. Residues G174, S214, and 235–236 (GG) contribute to the substrate site.

It belongs to the triosephosphate isomerase family. In terms of assembly, homodimer.

It is found in the cytoplasm. It carries out the reaction D-glyceraldehyde 3-phosphate = dihydroxyacetone phosphate. It functions in the pathway carbohydrate biosynthesis; gluconeogenesis. Its pathway is carbohydrate degradation; glycolysis; D-glyceraldehyde 3-phosphate from glycerone phosphate: step 1/1. Its function is as follows. Involved in the gluconeogenesis. Catalyzes stereospecifically the conversion of dihydroxyacetone phosphate (DHAP) to D-glyceraldehyde-3-phosphate (G3P). The protein is Triosephosphate isomerase of Streptococcus pyogenes serotype M1.